Here is a 349-residue protein sequence, read N- to C-terminus: NADH-quinone oxidoreductase subunit H (349 aa).

Helical transmembrane passes span 14 to 34, 85 to 105, 120 to 140, 164 to 184, 196 to 216, 243 to 263, 285 to 305, and 324 to 344; these read LLVW…GCVA, GLFL…WAVI, LLYI…AGWA, MGFA…VDIV, ILSW…ISGV, GMAF…VAAL, AGGF…FLWF, and VFIP…FSPL.

It belongs to the complex I subunit 1 family. In terms of assembly, NDH-1 is composed of 14 different subunits. Subunits NuoA, H, J, K, L, M, N constitute the membrane sector of the complex.

The protein resides in the cell inner membrane. It catalyses the reaction a quinone + NADH + 5 H(+)(in) = a quinol + NAD(+) + 4 H(+)(out). Functionally, NDH-1 shuttles electrons from NADH, via FMN and iron-sulfur (Fe-S) centers, to quinones in the respiratory chain. The immediate electron acceptor for the enzyme in this species is believed to be ubiquinone. Couples the redox reaction to proton translocation (for every two electrons transferred, four hydrogen ions are translocated across the cytoplasmic membrane), and thus conserves the redox energy in a proton gradient. This subunit may bind ubiquinone. In Chromobacterium violaceum (strain ATCC 12472 / DSM 30191 / JCM 1249 / CCUG 213 / NBRC 12614 / NCIMB 9131 / NCTC 9757 / MK), this protein is NADH-quinone oxidoreductase subunit H.